Here is a 369-residue protein sequence, read N- to C-terminus: Dual specificity protein phosphatase 1-A (369 aa).

The region spanning 21–138 (RAHKCLILDC…FSAQCPEFCT (118 aa)) is the Rhodanese domain. Position 168 is a phosphothreonine; by MAPK1 (Thr-168). Positions 175-316 (GPVEILPFLY…LLQFESQVLA (142 aa)) constitute a Tyrosine-protein phosphatase domain. Cys-260 functions as the Phosphocysteine intermediate in the catalytic mechanism.

This sequence belongs to the protein-tyrosine phosphatase family. Non-receptor class dual specificity subfamily. Post-translationally, phosphorylated by MAPK1/ERK2 at Thr-168 and at one or more serine residues in a progesterone-dependent manner. Phosphorylation reduces its rate of degradation but does not seem to affect phosphatase activity. As to expression, expressed in XIK-2 kidney cells.

Its subcellular location is the nucleus. The catalysed reaction is O-phospho-L-seryl-[protein] + H2O = L-seryl-[protein] + phosphate. The enzyme catalyses O-phospho-L-threonyl-[protein] + H2O = L-threonyl-[protein] + phosphate. It carries out the reaction O-phospho-L-tyrosyl-[protein] + H2O = L-tyrosyl-[protein] + phosphate. Dual specificity phosphatase that dephosphorylates MAP kinase MAPK1/ERK2 on both 'Thr-188' and 'Tyr-190', regulating its activity during the meiotic cell cycle. This is Dual specificity protein phosphatase 1-A from Xenopus laevis (African clawed frog).